A 216-amino-acid chain; its full sequence is V-type ATP synthase subunit D (216 aa).

This sequence belongs to the V-ATPase D subunit family.

Functionally, produces ATP from ADP in the presence of a proton gradient across the membrane. This is V-type ATP synthase subunit D from Clostridium botulinum (strain Loch Maree / Type A3).